The sequence spans 320 residues: ATP-dependent 6-phosphofructokinase (320 aa).

Glycine 12 contributes to the ATP binding site. ADP is bound by residues arginine 22–arginine 26 and arginine 55–aspartate 60. Residues arginine 73–phenylalanine 74 and glycine 103–serine 106 contribute to the ATP site. Aspartate 104 lines the Mg(2+) pocket. Residue threonine 126 to aspartate 128 coordinates substrate. The active-site Proton acceptor is aspartate 128. Residue arginine 155 participates in ADP binding. Substrate contacts are provided by residues arginine 163 and methionine 170–arginine 172. ADP is bound by residues glycine 186–glutamate 188, lysine 212, and lysine 214–histidine 216. Residues glutamate 223, arginine 244, and histidine 250 to arginine 253 each bind substrate.

This sequence belongs to the phosphofructokinase type A (PFKA) family. ATP-dependent PFK group I subfamily. Prokaryotic clade 'B1' sub-subfamily. As to quaternary structure, homotetramer. Mg(2+) serves as cofactor.

The protein resides in the cytoplasm. The catalysed reaction is beta-D-fructose 6-phosphate + ATP = beta-D-fructose 1,6-bisphosphate + ADP + H(+). It participates in carbohydrate degradation; glycolysis; D-glyceraldehyde 3-phosphate and glycerone phosphate from D-glucose: step 3/4. Allosterically activated by ADP and other diphosphonucleosides, and allosterically inhibited by phosphoenolpyruvate. Functionally, catalyzes the phosphorylation of D-fructose 6-phosphate to fructose 1,6-bisphosphate by ATP, the first committing step of glycolysis. The protein is ATP-dependent 6-phosphofructokinase of Escherichia fergusonii (strain ATCC 35469 / DSM 13698 / CCUG 18766 / IAM 14443 / JCM 21226 / LMG 7866 / NBRC 102419 / NCTC 12128 / CDC 0568-73).